We begin with the raw amino-acid sequence, 293 residues long: Phosphate-binding protein PstS 2 (293 aa).

A signal peptide spans 1–23; sequence MKKHKMLSLLAVSGLMGIGILAG. C24 carries N-palmitoyl cysteine lipidation. Residue C24 is the site of S-diacylglycerol cysteine attachment.

Belongs to the PstS family. The complex is composed of two ATP-binding proteins (PstB), two transmembrane proteins (PstC and PstA) and a solute-binding protein (PstS).

It is found in the cell membrane. In terms of biological role, part of the ABC transporter complex PstSACB involved in phosphate import. The protein is Phosphate-binding protein PstS 2 (pstS2) of Streptococcus agalactiae serotype III (strain NEM316).